A 141-amino-acid chain; its full sequence is Small ribosomal subunit protein bS16 (141 aa).

The segment at 84-141 (TRKARSNPEKSKPKAKAQERLEAARMAEEEAAAAAKAAAEAPAEEAPAAEAPAEEAQA) is disordered. Basic and acidic residues predominate over residues 89–111 (SNPEKSKPKAKAQERLEAARMAE). A compositionally biased stretch (low complexity) spans 115 to 141 (AAAAKAAAEAPAEEAPAAEAPAEEAQA).

Belongs to the bacterial ribosomal protein bS16 family.

This Parvibaculum lavamentivorans (strain DS-1 / DSM 13023 / NCIMB 13966) protein is Small ribosomal subunit protein bS16.